The chain runs to 160 residues: Cytosolic iron-sulfur assembly component 2A (160 aa).

Zn(2+) is bound by residues His89, His123, Glu150, and Glu153.

The protein belongs to the MIP18 family. In terms of assembly, monomer and homodimer. Component of the CIA complex. Interacts with CIAO1. Interacts with IREB2. Interacts with APAF1.

The protein localises to the cytoplasm. Its function is as follows. Component of the cytosolic iron-sulfur protein assembly (CIA) complex, a multiprotein complex that mediates the incorporation of iron-sulfur cluster into extramitochondrial Fe/S proteins. As a CIA complex component and in collaboration with CIAO1 specifically matures ACO1 and stabilizes IREB2, connecting cytosolic iron-sulfur protein maturation with cellular iron regulation. May play a role in chromosome segregation through establishment of sister chromatid cohesion. May induce apoptosis in collaboration with APAF1. In Bos taurus (Bovine), this protein is Cytosolic iron-sulfur assembly component 2A.